An 883-amino-acid chain; its full sequence is Bifunctional heparan sulfate N-deacetylase/N-sulfotransferase 2 (883 aa).

At 1 to 18 the chain is on the cytoplasmic side; the sequence is MLQLWKVVRPARQLELHR. A helical; Signal-anchor for type II membrane protein transmembrane segment spans residues 19–39; it reads LILLLIGFSLVSMGFLAYYVS. The Lumenal segment spans residues 40–883; the sequence is TSPKAKEPLP…REELQHSSVG (844 aa). Positions 41–597 are heparan sulfate N-deacetylase 2; that stretch reads SPKAKEPLPL…KRHKDIWSKE (557 aa). Residues 49-82 form a disordered region; the sequence is PLPLGDCSSSGAAGPGPARPPVPPRPQRPPETTR. A compositionally biased stretch (pro residues) spans 65–77; the sequence is PARPPVPPRPQRP. 3 N-linked (GlcNAc...) asparagine glycosylation sites follow: asparagine 233, asparagine 350, and asparagine 400. Residues 598–883 form a heparan sulfate N-sulfotransferase 2 region; it reads KTCDRLPKFL…REELQHSSVG (286 aa). Lysine 613 functions as the For sulfotransferase activity in the catalytic mechanism. 613-617 provides a ligand contact to 3'-phosphoadenylyl sulfate; sequence KTGTT. N-linked (GlcNAc...) asparagine glycosylation occurs at asparagine 666. A 3'-phosphoadenylyl sulfate-binding site is contributed by serine 711. Asparagine 726 and asparagine 802 each carry an N-linked (GlcNAc...) asparagine glycan. Cysteine 817 and cysteine 827 are disulfide-bonded. 832-836 contributes to the 3'-phosphoadenylyl sulfate binding site; the sequence is KGRRY.

Belongs to the sulfotransferase 1 family. NDST subfamily. As to quaternary structure, monomer. As to expression, widely expressed in adult and throughout development.

The protein localises to the golgi apparatus membrane. The enzyme catalyses alpha-D-glucosaminyl-[heparan sulfate](n) + 3'-phosphoadenylyl sulfate = N-sulfo-alpha-D-glucosaminyl-[heparan sulfate](n) + adenosine 3',5'-bisphosphate + 2 H(+). It functions in the pathway glycan metabolism; heparan sulfate biosynthesis. Its pathway is glycan metabolism; heparin biosynthesis. Functionally, essential bifunctional enzyme that catalyzes both the N-deacetylation and the N-sulfation of glucosamine (GlcNAc) of the glycosaminoglycan in heparan sulfate. Modifies the GlcNAc-GlcA disaccharide repeating sugar backbone to make N-sulfated heparosan, a prerequisite substrate for later modifications in heparin biosynthesis. Plays a role in determining the extent and pattern of sulfation of heparan sulfate. Required for the exosomal release of SDCBP, CD63 and syndecan. The polypeptide is Bifunctional heparan sulfate N-deacetylase/N-sulfotransferase 2 (Ndst2) (Mus musculus (Mouse)).